The primary structure comprises 940 residues: Lon protease homolog 1, mitochondrial (940 aa).

The N-terminal 61 residues, 1–61 (MLKLFTSSAS…AFFCSEPTNG (61 aa)), are a transit peptide targeting the mitochondrion. A disordered region spans residues 70–90 (KAVESDSEVSDSKSSSAIVPT). Ser-74 bears the Phosphoserine mark. Positions 100–309 (VLALPVPHRP…LTLELMKKEM (210 aa)) constitute a Lon N-terminal domain. An ATP-binding site is contributed by 464-471 (GPPGVGKT). The 185-residue stretch at 751–935 (QTPVGVVMGL…GKIFELAFGY (185 aa)) folds into the Lon proteolytic domain. Active-site residues include Ser-841 and Lys-884.

Belongs to the peptidase S16 family. In terms of assembly, homohexamer or homoheptamer. Organized in a ring with a central cavity.

The protein resides in the mitochondrion matrix. It catalyses the reaction Hydrolysis of proteins in presence of ATP.. In terms of biological role, ATP-dependent serine protease that mediates the selective degradation of misfolded, unassembled or oxidatively damaged polypeptides as well as certain short-lived regulatory proteins in the mitochondrial matrix. May also have a chaperone function in the assembly of inner membrane protein complexes. Participates in the regulation of mitochondrial gene expression and in the maintenance of the integrity of the mitochondrial genome. Binds to mitochondrial DNA in a site-specific manner. In Arabidopsis thaliana (Mouse-ear cress), this protein is Lon protease homolog 1, mitochondrial (LON1).